Consider the following 91-residue polypeptide: Acylphosphatase (91 aa).

The Acylphosphatase-like domain maps to 6–91 (CMRCYISGRV…WEDYITFDVL (86 aa)). Active-site residues include Arg21 and Asn39.

The protein belongs to the acylphosphatase family.

The catalysed reaction is an acyl phosphate + H2O = a carboxylate + phosphate + H(+). The protein is Acylphosphatase (acyP) of Legionella pneumophila (strain Lens).